A 276-amino-acid polypeptide reads, in one-letter code: Casein kinase II subunit beta-3 (276 aa).

Disordered regions lie at residues 1–22 and 34–86; these read MYKE…LGGA and KKLE…SEGD.

Belongs to the casein kinase 2 subunit beta family. Heterotetramer of two catalytic alpha subunits and two regulatory beta subunits. Interacts with CCA1. Interacts with LHY. Phosphorylated by alpha subunit.

It localises to the cytoplasm. It is found in the cytosol. The protein localises to the nucleus. Functionally, plays a complex role in regulating the basal catalytic activity of the alpha subunit. The tetrameric holoenzyme CK2, composed of two alpha and two beta subunits, phosphorylates the transcription factor PIF1 after an exposure to light, resulting in a proteasome-dependent degradation of PIF1 and promotion of photomorphogenesis. CK2 phosphorylates translation initiation factors. May participate in the regulation of the initiation of translation. Stimulates the binding of CCA1 to promoters. This chain is Casein kinase II subunit beta-3 (CKB3), found in Arabidopsis thaliana (Mouse-ear cress).